Here is a 229-residue protein sequence, read N- to C-terminus: MIRAIVTDIEGTTTDIRFVHNVLFPYARERLERFIRSGEQREPVNLLLNELRGEIHAPAASVDQLIETLFKFMDEDRKSPALKSIQGYIWREGYVNGDFTGHLYPDVVPALRRWSDQDIDIYIYSSGSVPAQKLLFSHSDEGDVTELLSGFFDTHVGAKRQVSSYRNISMKTGVPVHQMLFLSDIREELDAAREAGWKTVQLIRGEPDTQSTHRQVSSFDDIHPEQIPT.

Residues 208-218 (DTQSTHRQVSS) show a composition bias toward polar residues. The disordered stretch occupies residues 208 to 229 (DTQSTHRQVSSFDDIHPEQIPT). Positions 220–229 (DDIHPEQIPT) are enriched in basic and acidic residues.

The protein belongs to the HAD-like hydrolase superfamily. MasA/MtnC family. As to quaternary structure, monomer. It depends on Mg(2+) as a cofactor.

The enzyme catalyses 5-methylsulfanyl-2,3-dioxopentyl phosphate + H2O = 1,2-dihydroxy-5-(methylsulfanyl)pent-1-en-3-one + phosphate. It participates in amino-acid biosynthesis; L-methionine biosynthesis via salvage pathway; L-methionine from S-methyl-5-thio-alpha-D-ribose 1-phosphate: step 3/6. It functions in the pathway amino-acid biosynthesis; L-methionine biosynthesis via salvage pathway; L-methionine from S-methyl-5-thio-alpha-D-ribose 1-phosphate: step 4/6. In terms of biological role, bifunctional enzyme that catalyzes the enolization of 2,3-diketo-5-methylthiopentyl-1-phosphate (DK-MTP-1-P) into the intermediate 2-hydroxy-3-keto-5-methylthiopentenyl-1-phosphate (HK-MTPenyl-1-P), which is then dephosphorylated to form the acireductone 1,2-dihydroxy-3-keto-5-methylthiopentene (DHK-MTPene). The chain is Enolase-phosphatase E1 from Cronobacter sakazakii (Enterobacter sakazakii).